The chain runs to 359 residues: Histidinol-phosphate aminotransferase (359 aa).

Lysine 220 carries the post-translational modification N6-(pyridoxal phosphate)lysine.

It belongs to the class-II pyridoxal-phosphate-dependent aminotransferase family. Histidinol-phosphate aminotransferase subfamily. Homodimer. Pyridoxal 5'-phosphate serves as cofactor.

It carries out the reaction L-histidinol phosphate + 2-oxoglutarate = 3-(imidazol-4-yl)-2-oxopropyl phosphate + L-glutamate. It participates in amino-acid biosynthesis; L-histidine biosynthesis; L-histidine from 5-phospho-alpha-D-ribose 1-diphosphate: step 7/9. This is Histidinol-phosphate aminotransferase from Neisseria gonorrhoeae (strain ATCC 700825 / FA 1090).